Here is a 184-residue protein sequence, read N- to C-terminus: Interferon alpha-3 (184 aa).

A signal peptide spans 1–23 (MALPVSLLMALVVLSCHSSCSLG). Disulfide bonds link Cys-24–Cys-122 and Cys-52–Cys-162.

Belongs to the alpha/beta interferon family.

It is found in the secreted. Produced by macrophages, IFN-alpha have antiviral activities. Interferon stimulates the production of two enzymes: a protein kinase and an oligoadenylate synthetase. The polypeptide is Interferon alpha-3 (Equus caballus (Horse)).